Consider the following 275-residue polypeptide: Transmembrane protein 45B (275 aa).

7 helical membrane-spanning segments follow: residues 7-27 (HALP…KYPL), 47-67 (IVEA…EQFV), 94-114 (LFFA…HVPL), 116-136 (VDRL…YYHV), 146-166 (IHSL…LEVI), 180-200 (LIIL…PPFG), and 212-232 (LMFI…IVAV). Residues serine 270 and serine 272 each carry the phosphoserine modification.

This sequence belongs to the TMEM45 family. (Microbial infection) Interacts with sindbis virus nsP1 and nsP4; these interactions lead to viral RNA replication inhibition. As to quaternary structure, (Microbial infection) Interacts with chikungunya virus nsP1 and nsP4; these interactions lead to viral RNA replication inhibition.

It localises to the endosome membrane. The protein resides in the lysosome membrane. It is found in the golgi apparatus. The protein localises to the trans-Golgi network membrane. Its function is as follows. Plays a role in innate immunity. Mechanistically, promotes alphaviruses RNA degradation by interacting with the viral polymerase nsP4 and the mRNA-capping enzyme nsP1 and thereby interfering with the interaction between viral RNA and nsP1. This Homo sapiens (Human) protein is Transmembrane protein 45B (TMEM45B).